Here is a 282-residue protein sequence, read N- to C-terminus: 4-hydroxy-3-methylbut-2-enyl diphosphate reductase (282 aa).

Position 12 (Cys12) interacts with [4Fe-4S] cluster. 2 residues coordinate (2E)-4-hydroxy-3-methylbut-2-enyl diphosphate: His40 and His72. 2 residues coordinate dimethylallyl diphosphate: His40 and His72. Residues His40 and His72 each coordinate isopentenyl diphosphate. Cys94 is a [4Fe-4S] cluster binding site. Position 122 (His122) interacts with (2E)-4-hydroxy-3-methylbut-2-enyl diphosphate. Residue His122 participates in dimethylallyl diphosphate binding. An isopentenyl diphosphate-binding site is contributed by His122. The active-site Proton donor is Glu124. Thr160 provides a ligand contact to (2E)-4-hydroxy-3-methylbut-2-enyl diphosphate. Residue Cys188 coordinates [4Fe-4S] cluster. 3 residues coordinate (2E)-4-hydroxy-3-methylbut-2-enyl diphosphate: Ser216, Asn218, and Ser260. 3 residues coordinate dimethylallyl diphosphate: Ser216, Asn218, and Ser260. Residues Ser216, Asn218, and Ser260 each contribute to the isopentenyl diphosphate site.

The protein belongs to the IspH family. [4Fe-4S] cluster is required as a cofactor.

It catalyses the reaction isopentenyl diphosphate + 2 oxidized [2Fe-2S]-[ferredoxin] + H2O = (2E)-4-hydroxy-3-methylbut-2-enyl diphosphate + 2 reduced [2Fe-2S]-[ferredoxin] + 2 H(+). The catalysed reaction is dimethylallyl diphosphate + 2 oxidized [2Fe-2S]-[ferredoxin] + H2O = (2E)-4-hydroxy-3-methylbut-2-enyl diphosphate + 2 reduced [2Fe-2S]-[ferredoxin] + 2 H(+). The protein operates within isoprenoid biosynthesis; dimethylallyl diphosphate biosynthesis; dimethylallyl diphosphate from (2E)-4-hydroxy-3-methylbutenyl diphosphate: step 1/1. Its pathway is isoprenoid biosynthesis; isopentenyl diphosphate biosynthesis via DXP pathway; isopentenyl diphosphate from 1-deoxy-D-xylulose 5-phosphate: step 6/6. Functionally, catalyzes the conversion of 1-hydroxy-2-methyl-2-(E)-butenyl 4-diphosphate (HMBPP) into a mixture of isopentenyl diphosphate (IPP) and dimethylallyl diphosphate (DMAPP). Acts in the terminal step of the DOXP/MEP pathway for isoprenoid precursor biosynthesis. The sequence is that of 4-hydroxy-3-methylbut-2-enyl diphosphate reductase from Geobacter sulfurreducens (strain ATCC 51573 / DSM 12127 / PCA).